Reading from the N-terminus, the 688-residue chain is Elongation factor G 2 (688 aa).

The tr-type G domain occupies Asp-7–Arg-282. Residues Ser-16–Thr-23, Asp-80–His-84, and Asn-134–Asp-137 contribute to the GTP site.

This sequence belongs to the TRAFAC class translation factor GTPase superfamily. Classic translation factor GTPase family. EF-G/EF-2 subfamily.

Its subcellular location is the cytoplasm. In terms of biological role, catalyzes the GTP-dependent ribosomal translocation step during translation elongation. During this step, the ribosome changes from the pre-translocational (PRE) to the post-translocational (POST) state as the newly formed A-site-bound peptidyl-tRNA and P-site-bound deacylated tRNA move to the P and E sites, respectively. Catalyzes the coordinated movement of the two tRNA molecules, the mRNA and conformational changes in the ribosome. The chain is Elongation factor G 2 from Geobacter metallireducens (strain ATCC 53774 / DSM 7210 / GS-15).